A 232-amino-acid chain; its full sequence is Translation initiation factor IF-3 (232 aa).

Disordered stretches follow at residues 1–21 (MAIQ…RTNR) and 184–232 (LQSQ…AAQR). Residues 193-208 (AAAAAAPAAAPAAGAP) show a composition bias toward low complexity. The span at 209–222 (APTPAPAPAAPAPA) shows a compositional bias: pro residues. Residues 223–232 (PAAADPAAQR) show a composition bias toward low complexity.

This sequence belongs to the IF-3 family. Monomer.

It is found in the cytoplasm. IF-3 binds to the 30S ribosomal subunit and shifts the equilibrium between 70S ribosomes and their 50S and 30S subunits in favor of the free subunits, thus enhancing the availability of 30S subunits on which protein synthesis initiation begins. This chain is Translation initiation factor IF-3, found in Anaeromyxobacter sp. (strain K).